Reading from the N-terminus, the 652-residue chain is Forkhead box protein O1-A (652 aa).

Disordered regions lie at residues 1 to 57 (MADA…EPSS), 208 to 277 (SSWW…NSHS), and 359 to 406 (NLLS…QQTQ). The segment covering 41-57 (DSNTSSPAPSVKQEPSS) has biased composition (polar residues). Residues 134 to 228 (WGNMSYADLI…KSGKSPRRRA (95 aa)) constitute a DNA-binding region (fork-head). The segment covering 238–249 (AKSRGRAAKKKL) has biased composition (basic residues). Residues 362-397 (SPKNPSTGGPGSGSNQSSPSSLMQASPGYSPYSSPG) are compositionally biased toward low complexity.

Its subcellular location is the cytoplasm. The protein localises to the nucleus. Its function is as follows. Transcription factor that regulates metabolic homeostasis in response to oxidative stress. Binds to the consensus sequence 5'-TT[G/A]TTTTG-3' and the related Daf-16 family binding element (DBE) with consensus sequence 5'-TT[G/A]TTTAC-3'. Main regulator of redox balance and osteoblast numbers and controls bone mass. Orchestrates the endocrine function of the skeleton in regulating glucose metabolism. May be involved in regulating cellular homeostasis in the eye. May act as a positive regulator of apoptosis in cardiac smooth muscle cells as a result of its transcriptional activation of pro-apoptotic genes. The sequence is that of Forkhead box protein O1-A (foxo1a) from Danio rerio (Zebrafish).